Reading from the N-terminus, the 421-residue chain is E3 ubiquitin-protein ligase RMD5 (421 aa).

Positions 176 to 236 (EFIEMGQIVH…QIVKHGNPVE (61 aa)) constitute a CTLH domain. The RING-Gid-type zinc-finger motif lies at 361 to 404 (CPVLKEETTTENPPYSLACHHIISKKALDRLSKNGTITFKCPYC).

This sequence belongs to the RMD5/GID2 family. In terms of assembly, identified in the GID/CTLH complex. In the absence of stress, the complex exists as an inactive anticipatory complex (GID(Ant)), composed of VID30/GID1, the E3 ubiquitin-ligase RMD5/GID2, VID28/GID5, GID8, and the RING-like subunit FYV10/GID9, awaiting a substrate receptor to form the active E3 ligase complex. When cells are shifted to glucose-containing medium, the substrate receptor VID24/GID4 is induced and becomes part of the complex, named GID(SR4). Additionally, GID7 transforms the GID(SR4) E3 ligase core into a higher-order supramolecular assembly (Chelator-GID(SR4)) specifically tailored for FBP1 ubiquitination. Under osmotic or heat stress, the substrate receptor GID10 is induced and becomes part of the complex, named GID(SR10). Within the GID complex, interacts directly with GID8, FYV10/GID9 and VID28/GID5.

It localises to the cytoplasm. It carries out the reaction S-ubiquitinyl-[E2 ubiquitin-conjugating enzyme]-L-cysteine + [acceptor protein]-L-lysine = [E2 ubiquitin-conjugating enzyme]-L-cysteine + N(6)-ubiquitinyl-[acceptor protein]-L-lysine.. It functions in the pathway protein modification; protein ubiquitination. E3 ubiquitin-protein ligase component of the GID E3 ligase complex recruiting N termini and catalyzing ubiquitination of proteins targeted for degradation. GID E3 is regulated through assembly with interchangeable N-degron-binding substrate receptors induced by distinct environmental perturbations. Required for the adaptation to the presence of glucose in the growth medium; mediates in association with the substrate receptor VID24/GID4 the degradation of enzymes involved in gluconeogenesis when cells are shifted to glucose-containing medium. Required for proteasome-dependent catabolite degradation of fructose-1,6-bisphosphatase (FBP1), malate dehydrogenase (MDH2), and other gluconeogenic enzymes. This is E3 ubiquitin-protein ligase RMD5 from Saccharomyces cerevisiae (strain ATCC 204508 / S288c) (Baker's yeast).